The chain runs to 640 residues: Chaperone protein HtpG (640 aa).

An a; substrate-binding region spans residues 1-343; that stretch reads MQTAENIEHL…SSDLPLNVSR (343 aa). The interval 344–564 is b; that stretch reads EILQESKDID…THDVSGNLGR (221 aa). Residues 565-640 form a c region; that stretch reads LLKSAGQKVP…LLLQNILSGK (76 aa).

It belongs to the heat shock protein 90 family. In terms of assembly, homodimer.

It localises to the cytoplasm. Its function is as follows. Molecular chaperone. Has ATPase activity. This is Chaperone protein HtpG from Nitrosomonas europaea (strain ATCC 19718 / CIP 103999 / KCTC 2705 / NBRC 14298).